A 160-amino-acid polypeptide reads, in one-letter code: Cytochrome b6-f complex subunit 4 (160 aa).

3 consecutive transmembrane segments (helical) span residues 36–56 (LLYM…GLAV), 95–115 (LLGI…PFIE), and 131–151 (AVFL…ALPI).

It belongs to the cytochrome b family. PetD subfamily. In terms of assembly, the 4 large subunits of the cytochrome b6-f complex are cytochrome b6, subunit IV (17 kDa polypeptide, PetD), cytochrome f and the Rieske protein, while the 4 small subunits are PetG, PetL, PetM and PetN. The complex functions as a dimer.

Its subcellular location is the cellular thylakoid membrane. In terms of biological role, component of the cytochrome b6-f complex, which mediates electron transfer between photosystem II (PSII) and photosystem I (PSI), cyclic electron flow around PSI, and state transitions. This Synechococcus elongatus (strain ATCC 33912 / PCC 7942 / FACHB-805) (Anacystis nidulans R2) protein is Cytochrome b6-f complex subunit 4.